The primary structure comprises 1154 residues: Paired amphipathic helix protein pst3 (1154 aa).

2 disordered regions span residues 1–71 (MDVM…RSVT) and 91–110 (SGKD…SSSN). Basic and acidic residues predominate over residues 9 to 27 (DSERDNPGDKVETQSDKNH). Polar residues-rich tracts occupy residues 32–45 (SPSQ…TSLH) and 100–110 (QNAEGLSSSSN). The PAH 1 domain occupies 111 to 181 (RPLDVNDALS…EGFNTFLPSG (71 aa)). Disordered regions lie at residues 199–249 (GTPM…STEN) and 321–376 (DNVD…KTSR). Positions 228–241 (STSPTDSQPQPSAP) are enriched in low complexity. Residues 252–322 (PRVDFNYAIA…EEFKLFLPDN (71 aa)) form the PAH 2 domain. Polar residues-rich tracts occupy residues 323–337 (VDST…QKSP) and 365–376 (AQISRSISKTSR). Residues 403–472 (SPYAATQEEL…LWFSEFIRWS (70 aa)) enclose the PAH 3 domain. Residues 797–824 (NSNNTNVSFQTDETQTEDETMSDIHPDD) are disordered.

It is found in the nucleus. The chain is Paired amphipathic helix protein pst3 (pst3) from Schizosaccharomyces pombe (strain 972 / ATCC 24843) (Fission yeast).